A 492-amino-acid polypeptide reads, in one-letter code: Pyrin and HIN domain-containing protein 1 (492 aa).

Residues 1 to 88 (MANNYKKIVL…AETLKREKLK (88 aa)) form the Pyrin domain. Disordered stretches follow at residues 106-199 (KTKQ…KPLA) and 400-492 (KNTN…PAVP). A compositionally biased stretch (basic and acidic residues) spans 142–159 (PSEEETGTKRSKMSKEQT). Residues 160-173 (RPSCSAGASTSTAM) show a composition bias toward polar residues. Positions 181–194 (TSSSAPPNTSSTES) are enriched in low complexity. The HIN-200 domain occupies 199–399 (ANRHATASKN…SEMHSFIQIQ (201 aa)). 2 stretches are compositionally biased toward polar residues: residues 416-432 (QEQSQHPKPSEASTTLP) and 460-492 (GAQSSPANFRITSPTVAPPLSSDTSTNRHPAVP).

It belongs to the HIN-200 family. Interacts with MDM2. Expressed in spleen, lymph node and peripheral blood leukocytes, and at lower levels in thymus, bone marrow and fetal liver. Down-regulated in breast tumors.

It localises to the nucleus. The protein resides in the nucleoplasm. Its subcellular location is the nucleus speckle. Functionally, major mediator of the tumor suppressor activity of IFN in breast cancer cells. Promotes ubiquitination and subsequent degradation of MDM2, which leads to p53/TP53 stabilization. Promotes ubiquitination and subsequent degradation of HDAC1, which in turn enhances maspin expression, and impairs invasive activity of cancer cells. This Homo sapiens (Human) protein is Pyrin and HIN domain-containing protein 1 (PYHIN1).